Here is a 132-residue protein sequence, read N- to C-terminus: Ribosome-binding factor A (132 aa).

Belongs to the RbfA family. In terms of assembly, monomer. Binds 30S ribosomal subunits, but not 50S ribosomal subunits or 70S ribosomes.

Its subcellular location is the cytoplasm. Its function is as follows. One of several proteins that assist in the late maturation steps of the functional core of the 30S ribosomal subunit. Associates with free 30S ribosomal subunits (but not with 30S subunits that are part of 70S ribosomes or polysomes). Required for efficient processing of 16S rRNA. May interact with the 5'-terminal helix region of 16S rRNA. The sequence is that of Ribosome-binding factor A from Teredinibacter turnerae (strain ATCC 39867 / T7901).